The sequence spans 422 residues: F-box/kelch-repeat protein At3g27150 (422 aa).

Residues 68–114 (LLNVPQLVYELEVEILARVPRFEYWKLKLLNKGFSRLLKSDEIFKVR) form the F-box domain. 5 Kelch repeats span residues 162 to 212 (ESLC…TCGT), 213 to 264 (VVFV…YLRG), 266 to 312 (FYVL…SPPL), 314 to 361 (AVVG…VAFK), and 366 to 412 (KLLV…RFNH).

This is F-box/kelch-repeat protein At3g27150 from Arabidopsis thaliana (Mouse-ear cress).